A 412-amino-acid polypeptide reads, in one-letter code: Gamma-glutamyl phosphate reductase (412 aa).

It belongs to the gamma-glutamyl phosphate reductase family.

It localises to the cytoplasm. The catalysed reaction is L-glutamate 5-semialdehyde + phosphate + NADP(+) = L-glutamyl 5-phosphate + NADPH + H(+). It functions in the pathway amino-acid biosynthesis; L-proline biosynthesis; L-glutamate 5-semialdehyde from L-glutamate: step 2/2. Its function is as follows. Catalyzes the NADPH-dependent reduction of L-glutamate 5-phosphate into L-glutamate 5-semialdehyde and phosphate. The product spontaneously undergoes cyclization to form 1-pyrroline-5-carboxylate. In Bartonella bacilliformis (strain ATCC 35685 / KC583 / Herrer 020/F12,63), this protein is Gamma-glutamyl phosphate reductase.